Consider the following 226-residue polypeptide: Ribose-5-phosphate isomerase A (226 aa).

Substrate is bound by residues 26–29, 82–85, and 95–98; these read TGST, DGAD, and KGGG. E104 functions as the Proton acceptor in the catalytic mechanism. K122 contacts substrate.

It belongs to the ribose 5-phosphate isomerase family. As to quaternary structure, homodimer.

The enzyme catalyses aldehydo-D-ribose 5-phosphate = D-ribulose 5-phosphate. It functions in the pathway carbohydrate degradation; pentose phosphate pathway; D-ribose 5-phosphate from D-ribulose 5-phosphate (non-oxidative stage): step 1/1. In terms of biological role, catalyzes the reversible conversion of ribose-5-phosphate to ribulose 5-phosphate. This chain is Ribose-5-phosphate isomerase A, found in Streptococcus thermophilus (strain ATCC BAA-250 / LMG 18311).